Here is a 251-residue protein sequence, read N- to C-terminus: Hydroxyacylglutathione hydrolase (251 aa).

7 residues coordinate Zn(2+): H53, H55, D57, H58, H110, D127, and H165.

The protein belongs to the metallo-beta-lactamase superfamily. Glyoxalase II family. As to quaternary structure, monomer. Zn(2+) is required as a cofactor.

The catalysed reaction is an S-(2-hydroxyacyl)glutathione + H2O = a 2-hydroxy carboxylate + glutathione + H(+). The protein operates within secondary metabolite metabolism; methylglyoxal degradation; (R)-lactate from methylglyoxal: step 2/2. Functionally, thiolesterase that catalyzes the hydrolysis of S-D-lactoyl-glutathione to form glutathione and D-lactic acid. The sequence is that of Hydroxyacylglutathione hydrolase from Escherichia coli (strain SE11).